Reading from the N-terminus, the 845-residue chain is Protein P (845 aa).

The terminal protein domain (TP) stretch occupies residues 1 to 179; that stretch reads MPLSYQHFRK…FCGSPYSWEQ (179 aa). A spacer region spans residues 180–348; it reads ELQHGRLVIK…YCLSHLVNLR (169 aa). Residues 226 to 245 form a disordered region; sequence GLQPHQGPLASSQPGRSGSI. A polymerase/reverse transcriptase domain (RT) region spans residues 349–692; that stretch reads EDWGPCDEHG…YMNLYPVARQ (344 aa). Residues 359–602 enclose the Reverse transcriptase domain; the sequence is EHHIRIPRTP…YSLNFMGYII (244 aa). Asp-431, Asp-553, and Asp-554 together coordinate Mg(2+).

It belongs to the hepadnaviridae P protein family.

It carries out the reaction DNA(n) + a 2'-deoxyribonucleoside 5'-triphosphate = DNA(n+1) + diphosphate. The enzyme catalyses Endonucleolytic cleavage to 5'-phosphomonoester.. Its activity is regulated as follows. Activated by host HSP70 and HSP40 in vitro to be able to bind the epsilon loop of the pgRNA. Because deletion of the RNase H region renders the protein partly chaperone-independent, the chaperones may be needed indirectly to relieve occlusion of the RNA-binding site by this domain. Inhibited by several reverse-transcriptase inhibitors: Lamivudine, Adefovir and Entecavir. Multifunctional enzyme that converts the viral RNA genome into dsDNA in viral cytoplasmic capsids. This enzyme displays a DNA polymerase activity that can copy either DNA or RNA templates, and a ribonuclease H (RNase H) activity that cleaves the RNA strand of RNA-DNA heteroduplexes in a partially processive 3'- to 5'-endonucleasic mode. Neo-synthesized pregenomic RNA (pgRNA) are encapsidated together with the P protein, and reverse-transcribed inside the nucleocapsid. Initiation of reverse-transcription occurs first by binding the epsilon loop on the pgRNA genome, and is initiated by protein priming, thereby the 5'-end of (-)DNA is covalently linked to P protein. Partial (+)DNA is synthesized from the (-)DNA template and generates the relaxed circular DNA (RC-DNA) genome. After budding and infection, the RC-DNA migrates in the nucleus, and is converted into a plasmid-like covalently closed circular DNA (cccDNA). The activity of P protein does not seem to be necessary for cccDNA generation, and is presumably released from (+)DNA by host nuclear DNA repair machinery. This chain is Protein P, found in Homo sapiens (Human).